Reading from the N-terminus, the 332-residue chain is Ferredoxin--NADP reductase 2 (332 aa).

FAD contacts are provided by E37, Q45, Y50, V90, F124, D285, and T326.

This sequence belongs to the ferredoxin--NADP reductase type 2 family. As to quaternary structure, homodimer. FAD serves as cofactor.

It catalyses the reaction 2 reduced [2Fe-2S]-[ferredoxin] + NADP(+) + H(+) = 2 oxidized [2Fe-2S]-[ferredoxin] + NADPH. In Bacillus licheniformis (strain ATCC 14580 / DSM 13 / JCM 2505 / CCUG 7422 / NBRC 12200 / NCIMB 9375 / NCTC 10341 / NRRL NRS-1264 / Gibson 46), this protein is Ferredoxin--NADP reductase 2.